Reading from the N-terminus, the 58-residue chain is Ribosome biogenesis protein Nop10 (58 aa).

Belongs to the NOP10 family.

In terms of biological role, involved in ribosome biogenesis; more specifically in 18S rRNA pseudouridylation and in cleavage of pre-rRNA. The chain is Ribosome biogenesis protein Nop10 from Methanobrevibacter smithii (strain ATCC 35061 / DSM 861 / OCM 144 / PS).